Reading from the N-terminus, the 451-residue chain is UDP-N-acetylmuramoylalanine--D-glutamate ligase (451 aa).

116–122 contacts ATP; that stretch reads GTNGKTT.

It belongs to the MurCDEF family.

The protein localises to the cytoplasm. The enzyme catalyses UDP-N-acetyl-alpha-D-muramoyl-L-alanine + D-glutamate + ATP = UDP-N-acetyl-alpha-D-muramoyl-L-alanyl-D-glutamate + ADP + phosphate + H(+). It participates in cell wall biogenesis; peptidoglycan biosynthesis. Cell wall formation. Catalyzes the addition of glutamate to the nucleotide precursor UDP-N-acetylmuramoyl-L-alanine (UMA). The polypeptide is UDP-N-acetylmuramoylalanine--D-glutamate ligase (Clostridioides difficile (strain 630) (Peptoclostridium difficile)).